A 917-amino-acid polypeptide reads, in one-letter code: Sensor histidine kinase GacS (917 aa).

Helical transmembrane passes span V11–T31 and S168–V188. The region spanning R192 to E244 is the HAMP domain. Residues N291 to K512 form the Histidine kinase domain. A Phosphohistidine; by autocatalysis modification is found at H294. In terms of domain architecture, Response regulatory spans R668–T787. Position 717 is a 4-aspartylphosphate (D717). An HPt domain is found at K824–A917. Residue H863 is modified to Phosphohistidine.

Post-translationally, activation requires a sequential transfer of a phosphate group from a His in the primary transmitter domain, to an Asp in the receiver domain and to a His in the secondary transmitter domain.

The protein resides in the cell inner membrane. It carries out the reaction ATP + protein L-histidine = ADP + protein N-phospho-L-histidine.. In terms of biological role, member of the two-component regulatory system GacA/GacS which controls the expression of secondary metabolites and extracellular products. Activates GacA by phosphorylation. GacA acts (probably primarily) by activating expression of CsrA1 and CsrA2 antagonist small RNAs (sRNA) RsmX, RsmY and RsmZ which bind to and prevent translation repression by CsrA1 and CsrA2. Involved in the regulation of secondary metabolism and in the synthesis of the antifungal factors cyanide, 2,4-diacetylphloroglucinol and pyoluteorin. Exercises positive post-transcriptional control over the hcnABC and aprA genes; acts upstream of CsrA2 (rsmA). Controls expression of CsrA1 and CsrA2 antagonist sRNAs RsmX, RsmY and probably RsmZ. Probably controls expression of csrA1 (rsmE) and csrA2. The chain is Sensor histidine kinase GacS (gacS) from Pseudomonas protegens (strain DSM 19095 / LMG 27888 / CFBP 6595 / CHA0).